The sequence spans 394 residues: Protein arginine N-methyltransferase 8 (394 aa).

Gly2 carries N-myristoyl glycine lipidation. The disordered stretch occupies residues 21-40; the sequence is VESTEVSSAPPQPPQPVIPA. Short sequence motifs (SH3-binding) lie at residues 29 to 42 and 53 to 58; these read APPQ…PAKP and PSCPGR. Pro residues predominate over residues 30 to 39; it reads PPQPPQPVIP. Arg58 is modified (omega-N-methylarginine; by PRMT8). Arg73 bears the Asymmetric dimethylarginine; by PRMT8 mark. The 322-residue stretch at 73-394 folds into the SAM-dependent MTase PRMT-type domain; it reads RDYYFDSYAH…TSVSNDYKMR (322 aa). Residues His86, Arg95, Gly119, 119–122, Glu141, and Glu170 contribute to the S-adenosyl-L-methionine site; that span reads GSGT. Active-site residues include Glu185 and Glu194.

The protein belongs to the class I-like SAM-binding methyltransferase superfamily. Protein arginine N-methyltransferase family. PRMT8 subfamily. As to quaternary structure, homodimer. Tetramer; individual homodimers associates to form a homotetramer. Homooctamer; individual homodimers associates to form a homooctamer and homooligomerization is required for proper localization to the cell membrane. Heterodimer with PRMT1; heterodimerization may recruit PRMT1 activity to the plasma membrane. Interacts with PRMT2 (via the SH3 domain). Interacts with FYN (via the SH3 domain). Interacts with EWS; independently of EWS methylation status. Brain-specific. Only expressed in neurons, especially in the somatosensory and limbic systems, and a part of motor system. Highly expressed in all of the regions related to general somatosensory system. Expressed in most of the relay nuclei intervening the special somatosensory system, such as the auditory, visual and vestibular systems. Also present in forebrain limbic areas and thalamic nuclei relevant to limbic areas and in areas related to the motor system, such as the caudate putamen, Purkinje cells, inferior olivary nucleus and cerebellar nuclei.

It localises to the cell membrane. It catalyses the reaction L-arginyl-[protein] + S-adenosyl-L-methionine = N(omega)-methyl-L-arginyl-[protein] + S-adenosyl-L-homocysteine + H(+). It carries out the reaction L-arginyl-[protein] + 2 S-adenosyl-L-methionine = N(omega),N(omega)-dimethyl-L-arginyl-[protein] + 2 S-adenosyl-L-homocysteine + 2 H(+). Functionally, S-adenosyl-L-methionine-dependent and membrane-associated arginine methyltransferase that can both catalyze the formation of omega-N monomethylarginine (MMA) and asymmetrical dimethylarginine (aDMA) in proteins such as NIFK, myelin basic protein, histone H4, H2A and H2A/H2B dimer. Able to mono- and dimethylate EWS protein; however its precise role toward EWS remains unclear as it still interacts with fully methylated EWS. In Mus musculus (Mouse), this protein is Protein arginine N-methyltransferase 8.